A 72-amino-acid chain; its full sequence is Sec-independent protein translocase protein TatA (72 aa).

A helical membrane pass occupies residues M1–G21. A disordered region spans residues D47–S72. Over residues S51–S72 the composition is skewed to polar residues.

The protein belongs to the TatA/E family. In terms of assembly, the Tat system comprises two distinct complexes: a TatABC complex, containing multiple copies of TatA, TatB and TatC subunits, and a separate TatA complex, containing only TatA subunits. Substrates initially bind to the TatABC complex, which probably triggers association of the separate TatA complex to form the active translocon.

The protein resides in the cell inner membrane. In terms of biological role, part of the twin-arginine translocation (Tat) system that transports large folded proteins containing a characteristic twin-arginine motif in their signal peptide across membranes. TatA could form the protein-conducting channel of the Tat system. The protein is Sec-independent protein translocase protein TatA of Acinetobacter baumannii (strain AB307-0294).